A 296-amino-acid chain; its full sequence is Light-independent protochlorophyllide reductase iron-sulfur ATP-binding protein (296 aa).

ATP contacts are provided by residues 39–44 (GIGKST) and Lys-68. Ser-43 contacts Mg(2+). Positions 124 and 158 each coordinate [4Fe-4S] cluster. 209-210 (NR) lines the ATP pocket.

Belongs to the NifH/BchL/ChlL family. In terms of assembly, homodimer. Protochlorophyllide reductase is composed of three subunits; ChlL, ChlN and ChlB. [4Fe-4S] cluster is required as a cofactor.

The catalysed reaction is chlorophyllide a + oxidized 2[4Fe-4S]-[ferredoxin] + 2 ADP + 2 phosphate = protochlorophyllide a + reduced 2[4Fe-4S]-[ferredoxin] + 2 ATP + 2 H2O. The protein operates within porphyrin-containing compound metabolism; chlorophyll biosynthesis (light-independent). In terms of biological role, component of the dark-operative protochlorophyllide reductase (DPOR) that uses Mg-ATP and reduced ferredoxin to reduce ring D of protochlorophyllide (Pchlide) to form chlorophyllide a (Chlide). This reaction is light-independent. The L component serves as a unique electron donor to the NB-component of the complex, and binds Mg-ATP. The sequence is that of Light-independent protochlorophyllide reductase iron-sulfur ATP-binding protein from Prochlorococcus marinus (strain SARG / CCMP1375 / SS120).